We begin with the raw amino-acid sequence, 512 residues long: ATP synthase subunit alpha 1 (512 aa).

169–176 (GDRQTGKT) is an ATP binding site.

The protein belongs to the ATPase alpha/beta chains family. As to quaternary structure, F-type ATPases have 2 components, CF(1) - the catalytic core - and CF(0) - the membrane proton channel. CF(1) has five subunits: alpha(3), beta(3), gamma(1), delta(1), epsilon(1). CF(0) has four main subunits: a(1), b(1), b'(1) and c(9-12).

It is found in the cell inner membrane. It catalyses the reaction ATP + H2O + 4 H(+)(in) = ADP + phosphate + 5 H(+)(out). Produces ATP from ADP in the presence of a proton gradient across the membrane. The alpha chain is a regulatory subunit. This is ATP synthase subunit alpha 1 from Cereibacter sphaeroides (strain ATCC 17029 / ATH 2.4.9) (Rhodobacter sphaeroides).